Reading from the N-terminus, the 102-residue chain is NADH-quinone oxidoreductase subunit K 1 (102 aa).

3 helical membrane-spanning segments follow: residues 5 to 25 (FEHV…CVLV), 30 to 50 (LIML…AFVG), and 65 to 85 (LVIM…VVYL).

This sequence belongs to the complex I subunit 4L family. NDH-1 is composed of 14 different subunits. Subunits NuoA, H, J, K, L, M, N constitute the membrane sector of the complex.

Its subcellular location is the cell inner membrane. The catalysed reaction is a quinone + NADH + 5 H(+)(in) = a quinol + NAD(+) + 4 H(+)(out). In terms of biological role, NDH-1 shuttles electrons from NADH, via FMN and iron-sulfur (Fe-S) centers, to quinones in the respiratory chain. The immediate electron acceptor for the enzyme in this species is believed to be ubiquinone. Couples the redox reaction to proton translocation (for every two electrons transferred, four hydrogen ions are translocated across the cytoplasmic membrane), and thus conserves the redox energy in a proton gradient. The protein is NADH-quinone oxidoreductase subunit K 1 of Geobacter metallireducens (strain ATCC 53774 / DSM 7210 / GS-15).